Here is a 491-residue protein sequence, read N- to C-terminus: Ketol-acid reductoisomerase (NADP(+)) (491 aa).

Residues 15–208 form the KARI N-terminal Rossmann domain; that stretch reads AQLGKCRFMG…GGHRAGVLES (194 aa). NADP(+) is bound by residues 45–48, R68, R76, S78, and 108–110; these read CGAQ and DKQ. Residue H132 is part of the active site. G158 lines the NADP(+) pocket. KARI C-terminal knotted domains lie at 209–344 and 345–484; these read SFVA…TAPQ and YEGK…MTDM. The Mg(2+) site is built by D217, E221, E389, and E393. Position 414 (S414) interacts with substrate.

This sequence belongs to the ketol-acid reductoisomerase family. Mg(2+) is required as a cofactor.

The catalysed reaction is (2R)-2,3-dihydroxy-3-methylbutanoate + NADP(+) = (2S)-2-acetolactate + NADPH + H(+). It carries out the reaction (2R,3R)-2,3-dihydroxy-3-methylpentanoate + NADP(+) = (S)-2-ethyl-2-hydroxy-3-oxobutanoate + NADPH + H(+). It participates in amino-acid biosynthesis; L-isoleucine biosynthesis; L-isoleucine from 2-oxobutanoate: step 2/4. It functions in the pathway amino-acid biosynthesis; L-valine biosynthesis; L-valine from pyruvate: step 2/4. Its function is as follows. Involved in the biosynthesis of branched-chain amino acids (BCAA). Catalyzes an alkyl-migration followed by a ketol-acid reduction of (S)-2-acetolactate (S2AL) to yield (R)-2,3-dihydroxy-isovalerate. In the isomerase reaction, S2AL is rearranged via a Mg-dependent methyl migration to produce 3-hydroxy-3-methyl-2-ketobutyrate (HMKB). In the reductase reaction, this 2-ketoacid undergoes a metal-dependent reduction by NADPH to yield (R)-2,3-dihydroxy-isovalerate. This is Ketol-acid reductoisomerase (NADP(+)) from Salmonella typhimurium (strain LT2 / SGSC1412 / ATCC 700720).